The primary structure comprises 522 residues: Bifunctional purine biosynthesis protein PurH (522 aa).

Positions 1–143 constitute an MGS-like domain; that stretch reads MIRRALISVS…KNHARVAVVV (143 aa).

Belongs to the PurH family.

It carries out the reaction (6R)-10-formyltetrahydrofolate + 5-amino-1-(5-phospho-beta-D-ribosyl)imidazole-4-carboxamide = 5-formamido-1-(5-phospho-D-ribosyl)imidazole-4-carboxamide + (6S)-5,6,7,8-tetrahydrofolate. The catalysed reaction is IMP + H2O = 5-formamido-1-(5-phospho-D-ribosyl)imidazole-4-carboxamide. Its pathway is purine metabolism; IMP biosynthesis via de novo pathway; 5-formamido-1-(5-phospho-D-ribosyl)imidazole-4-carboxamide from 5-amino-1-(5-phospho-D-ribosyl)imidazole-4-carboxamide (10-formyl THF route): step 1/1. It functions in the pathway purine metabolism; IMP biosynthesis via de novo pathway; IMP from 5-formamido-1-(5-phospho-D-ribosyl)imidazole-4-carboxamide: step 1/1. In Sorangium cellulosum (strain So ce56) (Polyangium cellulosum (strain So ce56)), this protein is Bifunctional purine biosynthesis protein PurH.